The chain runs to 426 residues: tRNA(Ile)-lysidine synthase (426 aa).

19–24 provides a ligand contact to ATP; it reads SGGLDS.

This sequence belongs to the tRNA(Ile)-lysidine synthase family.

It localises to the cytoplasm. The enzyme catalyses cytidine(34) in tRNA(Ile2) + L-lysine + ATP = lysidine(34) in tRNA(Ile2) + AMP + diphosphate + H(+). Functionally, ligates lysine onto the cytidine present at position 34 of the AUA codon-specific tRNA(Ile) that contains the anticodon CAU, in an ATP-dependent manner. Cytidine is converted to lysidine, thus changing the amino acid specificity of the tRNA from methionine to isoleucine. In Neisseria meningitidis serogroup A / serotype 4A (strain DSM 15465 / Z2491), this protein is tRNA(Ile)-lysidine synthase.